We begin with the raw amino-acid sequence, 213 residues long: Thymidylate kinase (213 aa).

ATP is bound at residue 7-14 (GMDGSGKT).

It belongs to the thymidylate kinase family.

It catalyses the reaction dTMP + ATP = dTDP + ADP. Phosphorylation of dTMP to form dTDP in both de novo and salvage pathways of dTTP synthesis. The chain is Thymidylate kinase from Mycoplasma capricolum subsp. capricolum (strain California kid / ATCC 27343 / NCTC 10154).